A 1498-amino-acid polypeptide reads, in one-letter code: DNA-directed RNA polymerase subunit beta' (1498 aa).

Positions 67, 69, 82, and 85 each coordinate Zn(2+). The Mg(2+) site is built by D499, D501, and D503. The Zn(2+) site is built by C867, C943, C950, and C953.

It belongs to the RNA polymerase beta' chain family. In terms of assembly, the RNAP catalytic core consists of 2 alpha, 1 beta, 1 beta' and 1 omega subunit. When a sigma factor is associated with the core the holoenzyme is formed, which can initiate transcription. The cofactor is Mg(2+). Zn(2+) serves as cofactor.

It catalyses the reaction RNA(n) + a ribonucleoside 5'-triphosphate = RNA(n+1) + diphosphate. DNA-dependent RNA polymerase catalyzes the transcription of DNA into RNA using the four ribonucleoside triphosphates as substrates. In Chlorobium phaeobacteroides (strain BS1), this protein is DNA-directed RNA polymerase subunit beta'.